Reading from the N-terminus, the 413-residue chain is PAB1-binding protein 2 (413 aa).

The segment covering 1–23 (MSTETTKPSITTTPTTVLVSPNT) has biased composition (low complexity). The segment at 1–36 (MSTETTKPSITTTPTTVLVSPNTLKRKKGEDTSEEQ) is disordered. KH domains follow at residues 66 to 130 (DVHL…YGMI), 148 to 213 (EISI…TFYI), and 330 to 394 (FVQQ…IMLI).

As to quaternary structure, interacts with PAB1.

The protein resides in the nucleus. In Saccharomyces cerevisiae (strain ATCC 204508 / S288c) (Baker's yeast), this protein is PAB1-binding protein 2 (PBP2).